Consider the following 672-residue polypeptide: COBRA-like protein 10 (672 aa).

The N-terminal stretch at 1–35 (MRAIDVKTGMKIPWDVRYSLSLFIFLSSILFLSNG) is a signal peptide. Asparagine 79, asparagine 135, asparagine 264, asparagine 328, asparagine 339, asparagine 368, asparagine 422, asparagine 442, asparagine 483, asparagine 562, asparagine 570, and asparagine 589 each carry an N-linked (GlcNAc...) asparagine glycan. One can recognise a CBM2 domain in the interval 502-607 (KLPCPDNCGV…PVPGKQQSVI (106 aa)). The GPI-anchor amidated serine moiety is linked to residue serine 646. Positions 647–672 (SGHRRGISVSMSFVFATIAAFALMMD) are cleaved as a propeptide — removed in mature form. Positions 664 to 672 (IAAFALMMD) match the Required for processing by the PIG complex, a critical step for apical plasma membrane localization in pollen tubes motif.

Belongs to the COBRA family. In terms of processing, the GPI-anchor attachment at Ser-646 requires APTG1. Expressed in roots, stems, leaves, flowers and siliques. Specific expression in the pollen tube.

The protein resides in the cell membrane. Its subcellular location is the cytoplasm. The protein localises to the vesicle. Involved in the deposition of apical pectin cap and cellulose microfibrils in pollen tubes. Not essential for pollen development, hydration or germination, but required for pollen tubes growth in the female transmitting tract of pistil and toward micropyles, via the perception of ovule guidance cues. This chain is COBRA-like protein 10, found in Arabidopsis thaliana (Mouse-ear cress).